We begin with the raw amino-acid sequence, 433 residues long: PBSX phage terminase large subunit (433 aa).

The protein to B.subtilis YqaT and phage SPP1 terminase large subunit. Dimer of a small and a large subunit.

Its function is as follows. Functions as a terminase. The polypeptide is PBSX phage terminase large subunit (xtmB) (Bacillus subtilis (strain 168)).